The chain runs to 133 residues: Interleukin-5 (133 aa).

The first 20 residues, methionine 1–alanine 20, serve as a signal peptide directing secretion. Residues asparagine 46, asparagine 75, and asparagine 89 are each glycosylated (N-linked (GlcNAc...) asparagine).

The protein belongs to the IL-5 family. In terms of assembly, homodimer; disulfide-linked. Interacts with IL5RA. Interacts with CSF2RB. Expressed in lymphoid cells, including spleen, thymus, lymph nodes and peripheral blood mononuclear cells.

The protein resides in the secreted. Homodimeric cytokine expressed predominantly by T-lymphocytes and NK cells that plays an important role in the survival, differentiation, and chemotaxis of eosinophils. Also acts on activated and resting B-cells to induce immunoglobulin production, growth, and differentiation. Mechanistically, exerts its biological effects through a receptor composed of IL5RA subunit and the cytokine receptor common subunit beta/CSF2RB. Binding to the receptor leads to activation of various kinases including LYN, SYK and JAK2 and thereby propagates signals through the RAS-MAPK and JAK-STAT5 pathways respectively. The protein is Interleukin-5 (Il5) of Mus musculus (Mouse).